Here is a 346-residue protein sequence, read N- to C-terminus: DLGAVIYLLLWGRQLFALYSSNDVTDISDDRFPKPPEIANGYVEHLFRYQRKNYYRLRTEGDGVYTLNDKKQWINKAVGDKLPECEAVCGKPKNPANPVQRILGGHLDAKGSFPWQAKMVSRHNLTTGATLINEQWLLTTAKNLFLSHSENATAKDSAPTLTLYVGKKQLVEIEKVVLHPNYHQVDIGLIKLKQKVLVNERVMPICLPSKNYAEVGRVGYVSGWGQSNNFKLTDHLKYVMLPVADQDQCIRHYEGSTVPEKKTPKSPVGVQPILNEHTFCAGMSKYQEDTCYGDAGSAFAVHDLEEDTWYAAGILSFDKSCAVAEYGVYVKVTSIHVWVQKTIAEN.

The not cleaved signal peptide spans 1-16; the sequence is DLGAVIYLLLWGRQLF. Positions 32-85 constitute a Sushi domain; sequence FPKPPEIANGYVEHLFRYQRKNYYRLRTEGDGVYTLNDKKQWINKAVGDKLPEC. A Peptidase S1 domain is found at 102-344; that stretch reads ILGGHLDAKG…IHVWVQKTIA (243 aa). Disulfide bonds link Cys249–Cys280 and Cys291–Cys321.

Belongs to the peptidase S1 family.

It localises to the secreted. Its function is as follows. Primate-specific plasma protein associated with apolipoprotein L-I (apoL-I)-containing high-density lipoprotein (HDL). Binds hemoglobin with high affinity and may contribute to the clearance of cell-free hemoglobin to allow hepatic recycling of heme iron. The chain is Haptoglobin-related protein (HPR) from Pan troglodytes (Chimpanzee).